The chain runs to 209 residues: MTEQFDTRRRLMAMFRNEMRMEKLENTIAKKSTKFHTNSAALMTTIDLQQRKFEKLNALITRRCEDINTRTAFTRAVREKLAEERQKNAEMQAQLEKANDERIEQMDCVRTLSDASNTFINPSALPARLKGVTVLREEGRWISLDYDGDDLKGLSTFWAQAHSGSASQKWQQLLSMDKAIMPTLNDKGNVNVSVSSIIEIDLTASPSHK.

Residues 74–107 are a coiled coil; it reads TRAVREKLAEERQKNAEMQAQLEKANDERIEQMD.

It belongs to the SPC25 family. As to quaternary structure, component of the Ndc80 complex, which is composed of Ndc80, Nuf2 and Spc25.

It localises to the nucleus. Its subcellular location is the chromosome. The protein localises to the centromere. It is found in the kinetochore. In terms of biological role, acts as a component of the essential kinetochore-associated Ndc80 complex, which is required for chromosome segregation and spindle checkpoint activity during meiosis and mitosis. Required for kinetochore integrity and the organization of stable microtubule binding sites in the outer plate of the kinetochore. Participates in SAC signaling that responds specifically to disruptions in spindle microtubule dynamics. The NDC80 complex synergistically enhances the affinity of the SKA1 complex for microtubules and may allow the NDC80 complex to track depolymerizing microtubules. This chain is Kinetochore protein Spc25, found in Drosophila grimshawi (Hawaiian fruit fly).